Here is a 393-residue protein sequence, read N- to C-terminus: Cysteine protease ATG4B (393 aa).

Position 1 is an N-acetylmethionine (methionine 1). The residue at position 34 (serine 34) is a Phosphoserine. The active-site Nucleophile is cysteine 74. Cysteine 189 bears the S-nitrosocysteine mark. Residues aspartate 278 and histidine 280 contribute to the active site. Cysteine 292 and cysteine 301 each carry S-nitrosocysteine. Cysteine 292 and cysteine 361 are oxidised to a cystine. Residues serine 316 and serine 383 each carry the phosphoserine modification. The short motif at 388 to 391 (FEIL) is the LIR element. At serine 392 the chain carries Phosphoserine.

The protein belongs to the peptidase C54 family. Interacts with PFKP; promoting phosphorylation of ATG4B at Ser-34. Interacts with GBP7. Phosphorylation at Ser-383 and Ser-392 promotes autophagy by increasing protein delipidation activity without affecting proteolytic activation of ATG8 proteins. Phosphorylation at Ser-316 by ULK1 inhibits autophagy by decreasing both proteolytic activation and delipidation activities. Phosphorylation at Ser-316 is dephosphorylated by protein phosphatase 2A (PP2A). Phosphorylation at Ser-34 by AKT2 promotes its hydrolase activity, leading to increased proteolytic activation and delipidation of ATG8 family proteins. Phosphorylation at Ser-34 by AKT1 promotes mitochondrial localization and inhibition of the F1F0-ATP synthase activity, leading to elevation of mitochondrial reactive oxygen species (ROS). Post-translationally, ubiquitinated by RNF5, leading to its degradation by the proteasome. In terms of processing, S-nitrosylation in response to high glucose decreases both proteolytic activation and delipidation activities. O-glycosylated by OGT, leading to increase protease activity, thereby promoting the proteolytic activation of ATG8 family proteins. Post-translationally, forms reversible intrachain disulfide bonds in response to oxidative stress. Forms interchain disulfide bonds, leading to formation of homooligomers in response to oxidation.

It is found in the cytoplasm. Its subcellular location is the cytosol. It localises to the cytoplasmic vesicle. The protein resides in the autophagosome. The protein localises to the endoplasmic reticulum. It is found in the mitochondrion. The catalysed reaction is [protein]-C-terminal L-amino acid-glycyl-phosphatidylethanolamide + H2O = [protein]-C-terminal L-amino acid-glycine + a 1,2-diacyl-sn-glycero-3-phosphoethanolamine. It carries out the reaction [protein]-C-terminal L-amino acid-glycyl-phosphatidylserine + H2O = [protein]-C-terminal L-amino acid-glycine + a 1,2-diacyl-sn-glycero-3-phospho-L-serine. With respect to regulation, inhibited by N-ethylmaleimide. Redox-regulated during autophagy since reducing conditions activate ATG4A whereas an oxidizing environment such as the presence of H(2)O(2) inhibits its activity. The cysteine protease activity compounds is inhibited by styrylquinoline compounds 4-28 and LV-320. Cysteine protease that plays a key role in autophagy by mediating both proteolytic activation and delipidation of ATG8 family proteins. Required for canonical autophagy (macroautophagy), non-canonical autophagy as well as for mitophagy. The protease activity is required for proteolytic activation of ATG8 family proteins: cleaves the C-terminal amino acid of ATG8 proteins MAP1LC3A, MAP1LC3B, MAP1LC3C, GABARAPL1, GABARAPL2 and GABARAP, to reveal a C-terminal glycine. Exposure of the glycine at the C-terminus is essential for ATG8 proteins conjugation to phosphatidylethanolamine (PE) and insertion to membranes, which is necessary for autophagy. Protease activity is also required to counteract formation of high-molecular weight conjugates of ATG8 proteins (ATG8ylation): acts as a deubiquitinating-like enzyme that removes ATG8 conjugated to other proteins, such as ATG3. In addition to the protease activity, also mediates delipidation of ATG8 family proteins. Catalyzes delipidation of PE-conjugated forms of ATG8 proteins during macroautophagy. Also involved in non-canonical autophagy, a parallel pathway involving conjugation of ATG8 proteins to single membranes at endolysosomal compartments, by catalyzing delipidation of ATG8 proteins conjugated to phosphatidylserine (PS). Compared to other members of the family (ATG4A, ATG4C or ATG4C), constitutes the major protein for proteolytic activation of ATG8 proteins, while it displays weaker delipidation activity than other ATG4 paralogs. Involved in phagophore growth during mitophagy independently of its protease activity and of ATG8 proteins: acts by regulating ATG9A trafficking to mitochondria and promoting phagophore-endoplasmic reticulum contacts during the lipid transfer phase of mitophagy. The protein is Cysteine protease ATG4B of Rattus norvegicus (Rat).